Here is a 190-residue protein sequence, read N- to C-terminus: Protein LZIC (190 aa).

Residues 2–63 are a coiled coil; sequence ASRGKTETSK…SEFNDSLKKI (62 aa).

This sequence belongs to the CTNNBIP1 family. In terms of assembly, does not interact with CTNNB1.

The polypeptide is Protein LZIC (Lzic) (Mus musculus (Mouse)).